A 329-amino-acid chain; its full sequence is tRNA dimethylallyltransferase (329 aa).

24-31 (GSTGIGKT) contributes to the ATP binding site. A substrate-binding site is contributed by 26–31 (TGIGKT). Residues 49–52 (DSMQ) are interaction with substrate tRNA.

The protein belongs to the IPP transferase family. In terms of assembly, monomer. Requires Mg(2+) as cofactor.

The enzyme catalyses adenosine(37) in tRNA + dimethylallyl diphosphate = N(6)-dimethylallyladenosine(37) in tRNA + diphosphate. In terms of biological role, catalyzes the transfer of a dimethylallyl group onto the adenine at position 37 in tRNAs that read codons beginning with uridine, leading to the formation of N6-(dimethylallyl)adenosine (i(6)A). The chain is tRNA dimethylallyltransferase from Methylacidiphilum infernorum (isolate V4) (Methylokorus infernorum (strain V4)).